The sequence spans 36 residues: Photosystem I reaction center subunit VIII (36 aa).

A helical membrane pass occupies residues Leu6–Leu28.

It belongs to the PsaI family.

It is found in the plastid. It localises to the chloroplast thylakoid membrane. Its function is as follows. May help in the organization of the PsaL subunit. The sequence is that of Photosystem I reaction center subunit VIII from Amborella trichopoda.